We begin with the raw amino-acid sequence, 207 residues long: Outer-membrane lipoprotein LolB (207 aa).

The signal sequence occupies residues 1 to 21 (MPTNTVRCLRLLPLASVLLAA). The N-palmitoyl cysteine moiety is linked to residue Cys-22. Cys-22 carries S-diacylglycerol cysteine lipidation.

It belongs to the LolB family. Monomer.

Its subcellular location is the cell outer membrane. Its function is as follows. Plays a critical role in the incorporation of lipoproteins in the outer membrane after they are released by the LolA protein. The polypeptide is Outer-membrane lipoprotein LolB (Pectobacterium carotovorum subsp. carotovorum (strain PC1)).